We begin with the raw amino-acid sequence, 629 residues long: Embryonic polyadenylate-binding protein B (629 aa).

RRM domains lie at 11–89 (ASLY…WSQR), 99–175 (GNVF…HFKS), 191–268 (TNVY…RAQK), and 294–370 (VNLY…LAQR). The PABC domain occupies 539–616 (QEPLTASLLA…AVAVLQAHQA (78 aa)).

Belongs to the polyadenylate-binding protein type-1 family. Interacts with dazl in an RNA-independent manner. The C-terminus can self-associate and also interact with the C-terminus of pabpc1, independently of RNA. RRM 1 and RRM 2 interact with both eif4g1 and paip1, and the C-terminus also interacts with paip1. Prior to oocyte maturation, found in a complex with dazl and pum2 proteins and spdy1 mRNA; pum2 dissociates from the complex during maturation. Interacts with the translation termination factor sup35/erf3.

It localises to the cytoplasm. In terms of biological role, binds and protects the poly(A) tail of mRNA with or without an AU-rich element (ARE) and prevents mRNA deadenylation. Stimulates the translation of mRNAs to which it is bound during early development. The sequence is that of Embryonic polyadenylate-binding protein B (epabp-b) from Xenopus laevis (African clawed frog).